Here is a 154-residue protein sequence, read N- to C-terminus: Transcriptional repressor NrdR (154 aa).

The segment at 3–34 (CPFCRHPDSRVIDSRETDEGQAIRRRRSCPEC) is a zinc-finger region. In terms of domain architecture, ATP-cone spans 46–136 (LAVVKRSGVT…VYRSFESADD (91 aa)).

Belongs to the NrdR family. Zn(2+) serves as cofactor.

Negatively regulates transcription of bacterial ribonucleotide reductase nrd genes and operons by binding to NrdR-boxes. In Mycobacterium avium (strain 104), this protein is Transcriptional repressor NrdR.